The sequence spans 176 residues: MLDAFSKVVIQSDAKAAYIGGSDLTALKTFISEGNKRLDSVNYIASNASCIVSDAVSGMICENPGLIAAGGNCYTNRRMAACLRDGEIILRYVSYALLAGDSSVLEDRCLNGLKETYIALGVPTNSTARAVAIMKAAAVAFVTNTASQRKVEVAAGDCSALAAEVGTYFDKVESSI.

Cys50 and Cys61 together coordinate phycourobilin. Asn72 is subject to N4-methylasparagine. (2R,3E)-phycoerythrobilin is bound by residues Cys82 and Cys158.

The protein belongs to the phycobiliprotein family. As to quaternary structure, heterodimer of an alpha and a beta chain. Post-translationally, contains two covalently linked phycoerythrobilin chromophores and one covalently linked phycourobilin chromophore.

It localises to the plastid. The protein resides in the chloroplast thylakoid membrane. Light-harvesting photosynthetic bile pigment-protein from the phycobiliprotein complex. This is R-phycoerythrin beta chain (cpeB) from Aglaothamnion neglectum (Red alga).